A 123-amino-acid polypeptide reads, in one-letter code: UPF0102 protein CLM_2733 (123 aa).

Belongs to the UPF0102 family.

This is UPF0102 protein CLM_2733 from Clostridium botulinum (strain Kyoto / Type A2).